A 745-amino-acid chain; its full sequence is Serine/threonine-protein kinase BUR1 (745 aa).

Positions 1–21 (MSVIAGHHVPRSNDQRQYDTP) are disordered. One can recognise a Protein kinase domain in the interval 44 to 349 (YEVIEKLGQG…ALDALNHKFF (306 aa)). ATP-binding positions include 50–58 (LGQGTFGVV) and Lys73. Catalysis depends on Asp179, which acts as the Proton acceptor. Composition is skewed to basic and acidic residues over residues 380-406 (DKEQ…RYNA), 428-475 (DYID…DIQN), and 493-508 (KLRE…KKYD). A disordered region spans residues 380–701 (DKEQAVSELK…EVSDLEEDSD (322 aa)). Over residues 516 to 534 (SRGSKSPSPSKLSSISQSK) the composition is skewed to low complexity. The segment covering 547 to 557 (ASRESSLERKQ) has biased composition (basic and acidic residues). Polar residues-rich tracts occupy residues 558–567 (VSNGIRTTTD) and 586–598 (LTSN…PTRN). The span at 599-631 (KSVERPKDLEKPTNGVTEDRNKKPVLEEKKEVV) shows a compositional bias: basic and acidic residues. A compositionally biased stretch (low complexity) spans 632 to 660 (KPNLAIPKIKKSSSLVSLSSRSSTTPVIS). Polar residues predominate over residues 661–674 (NPSKVTKRAASSVT). A compositionally biased stretch (acidic residues) spans 692-701 (EVSDLEEDSD).

This sequence belongs to the protein kinase superfamily. CMGC Ser/Thr protein kinase family. CDC2/CDKX subfamily.

The protein resides in the nucleus. The enzyme catalyses L-seryl-[protein] + ATP = O-phospho-L-seryl-[protein] + ADP + H(+). The catalysed reaction is L-threonyl-[protein] + ATP = O-phospho-L-threonyl-[protein] + ADP + H(+). It carries out the reaction [DNA-directed RNA polymerase] + ATP = phospho-[DNA-directed RNA polymerase] + ADP + H(+). In terms of biological role, serine/threonine-protein kinase involved in transcription regulation. Phosphorylates the UBC2/RAD6 ubiquitin-conjugating enzyme (E2), leading to monoubiquitination of histone H2B and the silencing of telomeric-associated genes. Also required for histone H3 methylation. Necessary for the recovery from pheromone-induced growth arrest in the cell cycle G1 phase. Required for pseudohyphal growth and virulence in mice. In Candida albicans (strain SC5314 / ATCC MYA-2876) (Yeast), this protein is Serine/threonine-protein kinase BUR1 (CRK1).